Reading from the N-terminus, the 451-residue chain is Ubiquinone biosynthesis monooxygenase COQ6, mitochondrial (451 aa).

The protein belongs to the UbiH/COQ6 family. Component of a multi-subunit COQ enzyme complex. FAD is required as a cofactor.

The protein resides in the mitochondrion inner membrane. It carries out the reaction a 4-hydroxy-3-(all-trans-polyprenyl)benzoate + 2 reduced [2Fe-2S]-[ferredoxin] + O2 + 2 H(+) = a 3,4-dihydroxy-5-(all-trans-polyprenyl)benzoate + 2 oxidized [2Fe-2S]-[ferredoxin] + H2O. The catalysed reaction is a 2-methoxy-6-(all-trans-polyprenyl)phenol + 2 reduced [2Fe-2S]-[ferredoxin] + O2 + 2 H(+) = a 2-methoxy-6-(all-trans-polyprenyl)benzene-1,4-diol + 2 oxidized [2Fe-2S]-[ferredoxin] + H2O. Its pathway is cofactor biosynthesis; ubiquinone biosynthesis. In terms of biological role, FAD-dependent monooxygenase required for two non-consecutive steps during ubiquinone biosynthesis. Required for the C5-ring hydroxylation during ubiquinone biosynthesis by catalyzing the hydroxylation of 4-hydroxy-3-(all-trans-polyprenyl)benzoic acid to 3,4-dihydroxy-5-(all-trans-polyprenyl)benzoic acid. Also acts downstream of coq4, for the C1-hydroxylation during ubiquinone biosynthesis by catalyzing the hydroxylation of 2-methoxy-6-(all-trans-polyprenyl)phenol to 2-methoxy-6-(all-trans-polyprenyl)benzene-1,4-diol. The electrons required for the hydroxylation reaction are funneled indirectly to coq-6 from NADPH via a ferredoxin/ferredoxin reductase system. The polypeptide is Ubiquinone biosynthesis monooxygenase COQ6, mitochondrial (Caenorhabditis elegans).